The chain runs to 341 residues: Anthranilate phosphoribosyltransferase (341 aa).

Residues G84, 94-97, 112-120, and S124 each bind 5-phospho-alpha-D-ribose 1-diphosphate; these read NVST and KHGGRAASS. G84 contributes to the anthranilate binding site. S96 serves as a coordination point for Mg(2+). R170 is a binding site for anthranilate. Residues D229 and E230 each contribute to the Mg(2+) site.

This sequence belongs to the anthranilate phosphoribosyltransferase family. Homodimer. The cofactor is Mg(2+).

It catalyses the reaction N-(5-phospho-beta-D-ribosyl)anthranilate + diphosphate = 5-phospho-alpha-D-ribose 1-diphosphate + anthranilate. It functions in the pathway amino-acid biosynthesis; L-tryptophan biosynthesis; L-tryptophan from chorismate: step 2/5. Catalyzes the transfer of the phosphoribosyl group of 5-phosphorylribose-1-pyrophosphate (PRPP) to anthranilate to yield N-(5'-phosphoribosyl)-anthranilate (PRA). The polypeptide is Anthranilate phosphoribosyltransferase (Methylobacillus flagellatus (strain ATCC 51484 / DSM 6875 / VKM B-1610 / KT)).